Here is a 545-residue protein sequence, read N- to C-terminus: Tripartite motif-containing protein 26 (545 aa).

The RING-type zinc-finger motif lies at 16 to 57 (CSICLDYLRDPVTIDCGHVFCRSCTSDIRPISGNRPVCPLCK). The B box-type zinc-finger motif lies at 97–138 (QDMKLCERHQEKLHYYCEDDGKLLCVMCRESREHRPHTAVLV). Zn(2+) is bound by residues cysteine 102, histidine 105, cysteine 124, and histidine 130. Residues 197–243 (QFLKKREQHLLDQLATLEQLLTEGREKFKTRGVSELDRLTLVISELE) are a coiled coil. One can recognise a B30.2/SPRY domain in the interval 301 to 545 (RGLRQFQGKL…WPGARLLLRP (245 aa)). The segment at 382-443 (REGWSEDEEE…EEEEEVQESC (62 aa)) is disordered. Residues 386–440 (SEDEEEGEEEEEGEEEEEDEEVGYGDGYEDWETDEEDESLGEEEEEEEEEEEEVQ) show a composition bias toward acidic residues.

This sequence belongs to the TRIM/RBCC family. As to quaternary structure, interacts with TBK1; this interaction bridges together TBK1 and NEMO in order to activate TBK1. Interacts with INCA1. In terms of processing, autoubiquitinates upon viral infection. In turn, autoubiquitinated TRIM26 recruits NEMO and bridges TBK1-NEMO interaction.

It localises to the cytoplasm. Its subcellular location is the nucleus. It carries out the reaction S-ubiquitinyl-[E2 ubiquitin-conjugating enzyme]-L-cysteine + [acceptor protein]-L-lysine = [E2 ubiquitin-conjugating enzyme]-L-cysteine + N(6)-ubiquitinyl-[acceptor protein]-L-lysine.. E3 ubiquitin-protein ligase which regulates the IFN-beta production and antiviral response downstream of various DNA-encoded pattern-recognition receptors (PRRs). Also plays a central role in determining the response to different forms of oxidative stress by controlling levels of DNA glycosylases NEIL1, NEIL3 and NTH1 that are involved in repair of damaged DNA. Promotes nuclear IRF3 ubiquitination and proteasomal degradation. Bridges together TBK1 and NEMO during the innate response to viral infection leading to the activation of TBK1. Positively regulates LPS-mediated inflammatory innate immune response by catalyzing the 'Lys-11'-linked polyubiquitination of TAB1 to enhance its activation and subsequent NF-kappa-B and MAPK signaling. In a manner independent of its catalytic activity, inhibits WWP2, a SOX2-directed E3 ubiquitin ligase, and thus protects SOX2 from polyubiquitination and proteasomal degradation. Ubiquitinates the histone acetyltransferase protein complex component PHF20 and thereby triggers its degradation in the nucleus after its recruitment by the histone demethylase KDM6B, serving as a scaffold protein. Upon induction by TGF-beta, ubiquitinates the TFIID component TAF7 for proteasomal degradation. Induces ferroptosis by ubiquitinating SLC7A11, a critical protein for lipid reactive oxygen species (ROS) scavenging. This Mus musculus (Mouse) protein is Tripartite motif-containing protein 26 (Trim26).